Reading from the N-terminus, the 467-residue chain is Nuclear distribution protein nudF 1 (467 aa).

The LisH domain maps to 9–41 (QAEELHKSIIAYLASVNLSESATTLRAELGDAV). Residues 60–87 (TSVVRLQKKIMDLESRCAALQSELDSAT) adopt a coiled-coil conformation. WD repeat units lie at residues 113–154 (SHRS…RTVK), 156–196 (HTKA…KNIR), 200–247 (GHDH…CVKT), 250–289 (GHVD…TRST), 292–352 (GHEH…IKTL), 354–393 (GHDN…KCVR), 398–428 (THEH…NGTP), and 429–466 (AATT…RVFA). Low complexity predominate over residues 417-437 (GANGDAGANGTPAATTTSNGA). The interval 417–441 (GANGDAGANGTPAATTTSNGARQDP) is disordered.

The protein belongs to the WD repeat LIS1/nudF family. In terms of assembly, self-associates. Interacts with nudE and dynein.

It is found in the cytoplasm. Its subcellular location is the cytoskeleton. The protein resides in the spindle pole. Functionally, positively regulates the activity of the minus-end directed microtubule motor protein dynein. May enhance dynein-mediated microtubule sliding by targeting dynein to the microtubule plus end. Required for nuclear migration during vegetative growth as well as development. Required for retrograde early endosome (EE) transport from the hyphal tip. Required for localization of dynein to the mitotic spindle poles. Recruits additional proteins to the dynein complex at SPBs. In Aspergillus clavatus (strain ATCC 1007 / CBS 513.65 / DSM 816 / NCTC 3887 / NRRL 1 / QM 1276 / 107), this protein is Nuclear distribution protein nudF 1.